The following is a 176-amino-acid chain: Ribosome maturation factor RimM (176 aa).

Residues 99-176 form the PRC barrel domain; the sequence is EDEYYWSDLV…RMVVDWERDF (78 aa).

Belongs to the RimM family. Binds ribosomal protein uS19.

It localises to the cytoplasm. An accessory protein needed during the final step in the assembly of 30S ribosomal subunit, possibly for assembly of the head region. Essential for efficient processing of 16S rRNA. May be needed both before and after RbfA during the maturation of 16S rRNA. It has affinity for free ribosomal 30S subunits but not for 70S ribosomes. This chain is Ribosome maturation factor RimM, found in Psychrobacter sp. (strain PRwf-1).